The primary structure comprises 239 residues: tRNA (guanine-N(7)-)-methyltransferase (239 aa).

Residues glutamate 69, glutamate 94, aspartate 121, and aspartate 144 each coordinate S-adenosyl-L-methionine. Aspartate 144 is a catalytic residue. Lysine 148 serves as a coordination point for substrate. The interval 150-155 (RHNKRR) is interaction with RNA. Substrate-binding positions include aspartate 180 and 217-220 (TKFE).

The protein belongs to the class I-like SAM-binding methyltransferase superfamily. TrmB family. As to quaternary structure, monomer.

It carries out the reaction guanosine(46) in tRNA + S-adenosyl-L-methionine = N(7)-methylguanosine(46) in tRNA + S-adenosyl-L-homocysteine. It functions in the pathway tRNA modification; N(7)-methylguanine-tRNA biosynthesis. Its function is as follows. Catalyzes the formation of N(7)-methylguanine at position 46 (m7G46) in tRNA. In Salmonella choleraesuis (strain SC-B67), this protein is tRNA (guanine-N(7)-)-methyltransferase.